Here is a 515-residue protein sequence, read N- to C-terminus: Lysosomal acid glucosylceramidase (515 aa).

The signal sequence occupies residues 1–19 (MAARLIGFFLFQAVSWAYG). 2 disulfides stabilise this stretch: C23-C35 and C37-C42. N38 and N78 each carry an N-linked (GlcNAc...) asparagine glycan. N165 carries N-linked (GlcNAc...) (high mannose) asparagine glycosylation. E254 serves as the catalytic Proton donor. An N-linked (GlcNAc...) asparagine glycan is attached at N289. E358 acts as the Nucleophile in catalysis. N480 carries N-linked (GlcNAc...) asparagine glycosylation.

This sequence belongs to the glycosyl hydrolase 30 family. As to quaternary structure, interacts with saposin-C. Interacts with SCARB2. Interacts with TCP1. Interacts with GRN; this interaction prevents aggregation of GBA1-SCARB2 complex via interaction with HSPA1A upon stress.

The protein resides in the lysosome membrane. The enzyme catalyses a beta-D-glucosyl-(1&lt;-&gt;1')-N-acylsphing-4-enine + H2O = an N-acylsphing-4-enine + D-glucose. It catalyses the reaction a beta-D-galactosyl-(1&lt;-&gt;1')-N-acylsphing-4-enine + H2O = an N-acylsphing-4-enine + D-galactose. It carries out the reaction cholesteryl 3-beta-D-glucoside + H2O = cholesterol + D-glucose. The catalysed reaction is a beta-D-glucosyl-(1&lt;-&gt;1')-N-acylsphing-4-enine + cholesterol = cholesteryl 3-beta-D-glucoside + an N-acylsphing-4-enine. The enzyme catalyses beta-D-glucosyl-(1&lt;-&gt;1')-N-hexadecanoylsphing-4-enine + cholesterol = cholesteryl 3-beta-D-glucoside + N-hexadecanoylsphing-4-enine. It catalyses the reaction beta-D-glucosyl-N-(9Z-octadecenoyl)-sphing-4E-enine + cholesterol = N-(9Z-octadecenoyl)-sphing-4-enine + cholesteryl 3-beta-D-glucoside. It carries out the reaction beta-D-glucosyl-N-octanoylsphing-4E-enine + cholesterol = N-octanoylsphing-4-enine + cholesteryl 3-beta-D-glucoside. The catalysed reaction is beta-D-glucosyl-N-dodecanoylsphing-4-enine + cholesterol = N-dodecanoylsphing-4-enine + cholesteryl 3-beta-D-glucoside. The enzyme catalyses beta-D-glucosyl-(1&lt;-&gt;1)-N-octadecanoylsphing-4-enine + cholesterol = N-octadecanoylsphing-4-enine + cholesteryl 3-beta-D-glucoside. It catalyses the reaction beta-D-glucosyl-(1&lt;-&gt;1')-N-(15Z-tetracosenoyl)-sphing-4-enine + cholesterol = N-(15Z-tetracosenoyl)-sphing-4-enine + cholesteryl 3-beta-D-glucoside. It carries out the reaction a beta-D-galactosyl-(1&lt;-&gt;1')-N-acylsphing-4-enine + cholesterol = cholesteryl 3-beta-D-galactoside + an N-acylsphing-4-enine. The catalysed reaction is 1-(beta-D-galactosyl)-N-dodecanoylsphing-4-enine + cholesterol = cholesteryl 3-beta-D-galactoside + N-dodecanoylsphing-4-enine. The enzyme catalyses a beta-D-xylosyl-(1&lt;-&gt;1')-N-acylsphing-4-enine + cholesterol = cholesteryl 3-beta-D-xyloside + an N-acylsphing-4-enine. It catalyses the reaction beta-D-xylosyl-(1&lt;-&gt;1')-N-(9Z-octadecenoyl)-sphing-4-enine + cholesterol = cholesteryl 3-beta-D-xyloside + N-(9Z-octadecenoyl)-sphing-4-enine. Its pathway is steroid metabolism; cholesterol metabolism. It participates in sphingolipid metabolism. Its activity is regulated as follows. Inhibited by conduritol B epoxide/CBE. Glucosylceramidase that catalyzes, within the lysosomal compartment, the hydrolysis of glucosylceramides/GlcCers (such as beta-D-glucosyl-(1&lt;-&gt;1')-N-acylsphing-4-enine) into free ceramides (such as N-acylsphing-4-enine) and glucose. Plays a central role in the degradation of complex lipids and the turnover of cellular membranes. Through the production of ceramides, participates in the PKC-activated salvage pathway of ceramide formation. Catalyzes the glucosylation of cholesterol, through a transglucosylation reaction where glucose is transferred from GlcCer to cholesterol. GlcCer containing mono-unsaturated fatty acids (such as beta-D-glucosyl-N-(9Z-octadecenoyl)-sphing-4-enine) are preferred as glucose donors for cholesterol glucosylation when compared with GlcCer containing same chain length of saturated fatty acids (such as beta-D-glucosyl-N-octadecanoyl-sphing-4-enine). Under specific conditions, may alternatively catalyze the reverse reaction, transferring glucose from cholesteryl 3-beta-D-glucoside to ceramide. Can also hydrolyze cholesteryl 3-beta-D-glucoside producing glucose and cholesterol. Catalyzes the hydrolysis of galactosylceramides/GalCers (such as beta-D-galactosyl-(1&lt;-&gt;1')-N-acylsphing-4-enine), as well as the transfer of galactose between GalCers and cholesterol in vitro, but with lower activity than with GlcCers. Contrary to GlcCer and GalCer, xylosylceramide/XylCer (such as beta-D-xyosyl-(1&lt;-&gt;1')-N-acylsphing-4-enine) is not a good substrate for hydrolysis, however it is a good xylose donor for transxylosylation activity to form cholesteryl 3-beta-D-xyloside. This Mus musculus (Mouse) protein is Lysosomal acid glucosylceramidase (Gba1).